We begin with the raw amino-acid sequence, 59 residues long: Embryonic testis differentiation protein homolog A (59 aa).

Over residues 1 to 10 (MDKEVPKGSP) the composition is skewed to basic and acidic residues. The segment at 1 to 25 (MDKEVPKGSPREPALNIKKSDKSFK) is disordered.

This is Embryonic testis differentiation protein homolog A from Homo sapiens (Human).